The chain runs to 237 residues: Phosphoribosylaminoimidazole-succinocarboxamide synthase (237 aa).

The protein belongs to the SAICAR synthetase family.

It carries out the reaction 5-amino-1-(5-phospho-D-ribosyl)imidazole-4-carboxylate + L-aspartate + ATP = (2S)-2-[5-amino-1-(5-phospho-beta-D-ribosyl)imidazole-4-carboxamido]succinate + ADP + phosphate + 2 H(+). It functions in the pathway purine metabolism; IMP biosynthesis via de novo pathway; 5-amino-1-(5-phospho-D-ribosyl)imidazole-4-carboxamide from 5-amino-1-(5-phospho-D-ribosyl)imidazole-4-carboxylate: step 1/2. The sequence is that of Phosphoribosylaminoimidazole-succinocarboxamide synthase from Shigella boydii serotype 4 (strain Sb227).